The sequence spans 415 residues: Serine hydroxymethyltransferase (415 aa).

(6S)-5,6,7,8-tetrahydrofolate is bound by residues Leu-119 and 123-125 (GHL). N6-(pyridoxal phosphate)lysine is present on Lys-228. Position 353 to 355 (353 to 355 (SAF)) interacts with (6S)-5,6,7,8-tetrahydrofolate.

It belongs to the SHMT family. As to quaternary structure, homodimer. Pyridoxal 5'-phosphate serves as cofactor.

The protein localises to the cytoplasm. The catalysed reaction is (6R)-5,10-methylene-5,6,7,8-tetrahydrofolate + glycine + H2O = (6S)-5,6,7,8-tetrahydrofolate + L-serine. Its pathway is one-carbon metabolism; tetrahydrofolate interconversion. It functions in the pathway amino-acid biosynthesis; glycine biosynthesis; glycine from L-serine: step 1/1. Functionally, catalyzes the reversible interconversion of serine and glycine with tetrahydrofolate (THF) serving as the one-carbon carrier. Also exhibits THF-independent aldolase activity toward beta-hydroxyamino acids, producing glycine and aldehydes, via a retro-aldol mechanism. In Halobacterium salinarum (strain ATCC 29341 / DSM 671 / R1), this protein is Serine hydroxymethyltransferase.